A 221-amino-acid polypeptide reads, in one-letter code: uncharacterized protein (221 aa).

The next 4 helical transmembrane spans lie at 30 to 50 (FGIF…LPLA), 62 to 82 (AGVV…LYWI), 144 to 164 (VWVF…VYVY), and 179 to 199 (ILDQ…LLYL).

This sequence belongs to the DedA family.

It localises to the cell membrane. This is an uncharacterized protein from Bacillus subtilis (strain 168).